We begin with the raw amino-acid sequence, 305 residues long: MAQVKRVRRDVSGIILLDKPRGFTSNAALQKVRWLLNAEKAGHTGSLDPLATGVLPLCFGEATKFSQYLLDADKAYETVMQLGVTTTTADAEGEVLERKPVAVTREQLEALLPQFRGDILQVPPMYSALKRDGQPLYKLARAGEVVEREPRSVNIARLELLALEGDKARLAVACSKGTYIRTLVEDLGQQLGCGAHVAELRRTQAGPFDLSQTVTLETLERLHGEGGAEALDALLQPVDSGLEHWPLLQLSEHSAYYWLHGQPVRAPEAPKYGMVRVQDNNGRFIGIGEVSEDGRIAPRRLIRSE.

Residue aspartate 48 is the Nucleophile of the active site.

Belongs to the pseudouridine synthase TruB family. Type 1 subfamily.

The enzyme catalyses uridine(55) in tRNA = pseudouridine(55) in tRNA. Its function is as follows. Responsible for synthesis of pseudouridine from uracil-55 in the psi GC loop of transfer RNAs. In Stutzerimonas stutzeri (strain A1501) (Pseudomonas stutzeri), this protein is tRNA pseudouridine synthase B.